Here is a 92-residue protein sequence, read N- to C-terminus: Nodulation protein F (92 aa).

A Carrier domain is found at 4 to 88 (QLTLEIISAI…DVVEAVRGLL (85 aa)). O-(pantetheine 4'-phosphoryl)serine is present on Ser45.

Post-translationally, 4'-phosphopantetheine is transferred from CoA to a specific serine of apo-NodF.

Its function is as follows. Proposed to synthesize nod factor fatty acyl chain. Involved in trans-2,trans-4,trans-6,cis-11-octadecatetraenoic acid biosynthesis. This chain is Nodulation protein F (nodF), found in Rhizobium leguminosarum bv. viciae.